A 585-amino-acid chain; its full sequence is Pyruvate kinase (585 aa).

R32 is a binding site for substrate. N34, S36, D66, and T67 together coordinate K(+). An ATP-binding site is contributed by 34 to 37 (NFSH). R73 and K156 together coordinate ATP. E221 is a Mg(2+) binding site. G244, D245, and T277 together coordinate substrate. Position 245 (D245) interacts with Mg(2+).

The protein belongs to the pyruvate kinase family. It in the C-terminal section; belongs to the PEP-utilizing enzyme family. Requires Mg(2+) as cofactor. K(+) serves as cofactor.

The enzyme catalyses pyruvate + ATP = phosphoenolpyruvate + ADP + H(+). Its pathway is carbohydrate degradation; glycolysis; pyruvate from D-glyceraldehyde 3-phosphate: step 5/5. The polypeptide is Pyruvate kinase (pyk) (Staphylococcus aureus (strain USA300)).